The chain runs to 44 residues: Cytochrome b559 subunit beta (44 aa).

Residues 19 to 35 form a helical membrane-spanning segment; sequence WLSVHALGVPSVFFLGA. Residue histidine 23 coordinates heme.

This sequence belongs to the PsbE/PsbF family. As to quaternary structure, heterodimer of an alpha subunit and a beta subunit. PSII is composed of 1 copy each of membrane proteins PsbA, PsbB, PsbC, PsbD, PsbE, PsbF, PsbH, PsbI, PsbJ, PsbK, PsbL, PsbM, PsbT, PsbX, PsbY, PsbZ, Psb30/Ycf12, peripheral proteins PsbO, CyanoQ (PsbQ), PsbU, PsbV and a large number of cofactors. It forms dimeric complexes. Requires heme b as cofactor.

The protein localises to the cellular thylakoid membrane. Its function is as follows. This b-type cytochrome is tightly associated with the reaction center of photosystem II (PSII). PSII is a light-driven water:plastoquinone oxidoreductase that uses light energy to abstract electrons from H(2)O, generating O(2) and a proton gradient subsequently used for ATP formation. It consists of a core antenna complex that captures photons, and an electron transfer chain that converts photonic excitation into a charge separation. The chain is Cytochrome b559 subunit beta from Synechococcus elongatus (strain ATCC 33912 / PCC 7942 / FACHB-805) (Anacystis nidulans R2).